We begin with the raw amino-acid sequence, 66 residues long: Large ribosomal subunit protein bL35 (66 aa).

Residues 21–40 (KIKSTQSAKRHGMTKRSKRS) are disordered. Basic residues predominate over residues 28-40 (AKRHGMTKRSKRS).

It belongs to the bacterial ribosomal protein bL35 family.

The protein is Large ribosomal subunit protein bL35 of Ehrlichia canis (strain Jake).